The chain runs to 366 residues: Bacteriochlorophyll a protein (366 aa).

Residues H111, H146, H290, H297, and H298 each coordinate bacteriochlorophyll a.

As to quaternary structure, homotrimer. Each subunit contains 7 molecules of bacteriochlorophyll a.

In terms of biological role, intermediary in the transfer of excitation energy from the chlorophyll to the reaction centers. This Chlorobaculum tepidum (strain ATCC 49652 / DSM 12025 / NBRC 103806 / TLS) (Chlorobium tepidum) protein is Bacteriochlorophyll a protein (fmoA).